A 381-amino-acid chain; its full sequence is Cytochrome b (381 aa).

A run of 4 helical transmembrane segments spans residues 36-56 (FGSL…FLTM), 80-101 (WLIR…YIHI), 116-136 (WMVG…GYVL), and 181-201 (FYTF…IHLL). His86 and His100 together coordinate heme b. Heme b contacts are provided by His185 and His199. An a ubiquinone-binding site is contributed by His204. The next 4 membrane-spanning stretches (helical) occupy residues 229-249 (FKDM…TLTN), 291-311 (LGGV…PLTF), 323-343 (MNQI…WIGA), and 350-370 (YVFV…INPM).

The protein belongs to the cytochrome b family. As to quaternary structure, the main subunits of complex b-c1 are: cytochrome b, cytochrome c1 and the Rieske protein. Heme b is required as a cofactor.

The protein resides in the mitochondrion inner membrane. Component of the ubiquinol-cytochrome c reductase complex (complex III or cytochrome b-c1 complex) that is part of the mitochondrial respiratory chain. The b-c1 complex mediates electron transfer from ubiquinol to cytochrome c. Contributes to the generation of a proton gradient across the mitochondrial membrane that is then used for ATP synthesis. The chain is Cytochrome b (MT-CYB) from Ostrinia nubilalis (European corn borer).